The primary structure comprises 309 residues: Probable pathogenesis-related protein ARB_02861 (309 aa).

A signal peptide spans 1–17 (MKSSVLMTALCVAGSLA). Residues 47-59 (CPTVIPTTSYKPE) show a composition bias toward low complexity. Residues 47 to 152 (CPTVIPTTSY…PPPPGKDYKE (106 aa)) form a disordered region. Composition is skewed to pro residues over residues 61–92 (TSKP…PCPE) and 99–147 (APPP…PPPG). The region spanning 154 to 284 (AGYHHNVHRS…GDAYYTVCNY (131 aa)) is the SCP domain. N-linked (GlcNAc...) asparagine glycosylation occurs at Asn-164.

It belongs to the CRISP family.

The protein localises to the secreted. Secreted protein required for efficient export of lipids such as acetylated sterols. Acts in detoxification of hydrophobic compounds. This Arthroderma benhamiae (strain ATCC MYA-4681 / CBS 112371) (Trichophyton mentagrophytes) protein is Probable pathogenesis-related protein ARB_02861.